The primary structure comprises 139 residues: Actin-depolymerizing factor 9 (139 aa).

The ADF-H domain maps to 7 to 139; it reads GLAVNDECKF…SLDIIRARAH (133 aa).

The protein belongs to the actin-binding proteins ADF family.

In terms of biological role, actin-depolymerizing protein. Severs actin filaments (F-actin) and binds to actin monomers. The protein is Actin-depolymerizing factor 9 (ADF9) of Oryza sativa subsp. japonica (Rice).